We begin with the raw amino-acid sequence, 754 residues long: Circadian input-output histidine kinase CikA (754 aa).

The tract at residues 1-183 (MLAPSSNCSL…QVSAQIRLSL (183 aa)) is N-terminal domain, not required to complement the deletion strain. The tract at residues 184 to 338 (DLSEILTTTI…RDILQHLAEH (155 aa)) is GAF domain, required to complement the deletion strain. The 222-residue stretch at 390 to 611 (TMSHELRTPL…TFTVWIPEQT (222 aa)) folds into the Histidine kinase domain. His-393 carries the post-translational modification Phosphohistidine; by autocatalysis. Residues 606-754 (WIPEQTLIEP…NLSEGDRPSS (149 aa)) are psR domain, required to complement the deletion strain and for cell pole localization, attenuates autophosphorylation activity. Binds KaiB(fs). The Response regulatory domain occupies 629–742 (HILLLEEEDE…LLLTTLQGLC (114 aa)).

In the N-terminal section; belongs to the phytochrome family. In terms of assembly, homodimer. Part of the circadian clock (KaiA, KaiB, KaiC, CikA, RpaA, SasA), the composition of which varies during the circadian cycle. Interacts with LdpA. KaiA and CikA compete for binding to KaiB(fs).

It is found in the cytoplasm. It localises to the membrane. It carries out the reaction ATP + protein L-histidine = ADP + protein N-phospho-L-histidine.. In terms of biological role, functions in an input pathway to the Kai circadian clock. Senses oxidized quinones via its C-terminal pseudo-receiver domain, providing a link between cell metabolism and the clock. Affects the ratio of phosphorylated to unphosphorylated KaiC, binds quinones via its pseudo-receptor domain. Quinone-binding destabilizes the protein rapidly. Autophosphorylates, does not transfer the phosphate to its pseudo-receiver (PsR) domain. May play a role in cell division, as suggested by its polar location and increased cell length in a deletion strain. Its function is as follows. Member of the two-component regulatory system CikA/RpaA output pathway from the circadian clock, negatively regulating kaiBC expression independently of labA and of sasA. One of three clock output pathways. Dephosphorylates phospho-RpaA, enhanced by KaiB and KaiC, has only modest kinase activity on RpaA. A very robust clock is reconstituted with KaiA, KaiB, KaiC, SasA, CikA and RpaA; output is measured by transcription from an appropriate reporter. The sequence is that of Circadian input-output histidine kinase CikA from Synechococcus elongatus (strain ATCC 33912 / PCC 7942 / FACHB-805) (Anacystis nidulans R2).